The chain runs to 282 residues: Energy-coupling factor transporter ATP-binding protein EcfA2 (282 aa).

An ABC transporter domain is found at 1-234 (MKGSPFEKVA…ADELVALGLD (234 aa)). ATP is bound at residue 28–35 (GHTGSGKS).

It belongs to the ABC transporter superfamily. Energy-coupling factor EcfA family. Forms a stable energy-coupling factor (ECF) transporter complex composed of 2 membrane-embedded substrate-binding proteins (S component), 2 ATP-binding proteins (A component) and 2 transmembrane proteins (T component).

It localises to the cell membrane. Its function is as follows. ATP-binding (A) component of a common energy-coupling factor (ECF) ABC-transporter complex. Unlike classic ABC transporters this ECF transporter provides the energy necessary to transport a number of different substrates. The protein is Energy-coupling factor transporter ATP-binding protein EcfA2 of Halalkalibacterium halodurans (strain ATCC BAA-125 / DSM 18197 / FERM 7344 / JCM 9153 / C-125) (Bacillus halodurans).